A 433-amino-acid polypeptide reads, in one-letter code: 3-phosphoshikimate 1-carboxyvinyltransferase (433 aa).

Positions 22, 23, and 27 each coordinate 3-phosphoshikimate. Lysine 22 provides a ligand contact to phosphoenolpyruvate. Positions 96 and 130 each coordinate phosphoenolpyruvate. 3-phosphoshikimate contacts are provided by serine 176, serine 177, glutamine 178, serine 204, aspartate 319, asparagine 342, and lysine 346. Glutamine 178 contributes to the phosphoenolpyruvate binding site. Aspartate 319 acts as the Proton acceptor in catalysis. Positions 350, 394, and 419 each coordinate phosphoenolpyruvate.

The protein belongs to the EPSP synthase family. Monomer.

The protein localises to the cytoplasm. The enzyme catalyses 3-phosphoshikimate + phosphoenolpyruvate = 5-O-(1-carboxyvinyl)-3-phosphoshikimate + phosphate. Its pathway is metabolic intermediate biosynthesis; chorismate biosynthesis; chorismate from D-erythrose 4-phosphate and phosphoenolpyruvate: step 6/7. In terms of biological role, catalyzes the transfer of the enolpyruvyl moiety of phosphoenolpyruvate (PEP) to the 5-hydroxyl of shikimate-3-phosphate (S3P) to produce enolpyruvyl shikimate-3-phosphate and inorganic phosphate. This Actinobacillus succinogenes (strain ATCC 55618 / DSM 22257 / CCUG 43843 / 130Z) protein is 3-phosphoshikimate 1-carboxyvinyltransferase.